A 215-amino-acid polypeptide reads, in one-letter code: uncharacterized protein (215 aa).

An N-terminal signal peptide occupies residues 1-17 (MKKVLASATILSLMLVG). A disordered region spans residues 17–110 (GCSNGGNDES…NKQQQSVQDN (94 aa)). Cysteine 18 carries the N-palmitoyl cysteine lipid modification. A lipid anchor (S-diacylglycerol cysteine) is attached at cysteine 18. The span at 25 to 62 (ESSHKDDSSKTEQKDKSSSQHDSKKDSKRNDTNNKQDN) shows a compositional bias: basic and acidic residues. Low complexity-rich tracts occupy residues 63–76 (QENN…NNQN) and 91–110 (NSNG…VQDN).

It is found in the cell membrane. This is an uncharacterized protein from Staphylococcus epidermidis (strain ATCC 35984 / DSM 28319 / BCRC 17069 / CCUG 31568 / BM 3577 / RP62A).